Here is a 1183-residue protein sequence, read N- to C-terminus: Putative ATP-dependent RNA helicase PB1A10.06c (1183 aa).

Disordered regions lie at residues 1–92 and 165–315; these read MGRL…KKRL and ETTT…RASR. Residues 60–81 show a composition bias toward basic and acidic residues; sequence VPKEERQKRKQELKDQLLKENE. 2 stretches are compositionally biased toward low complexity: residues 165 to 176 and 184 to 196; these read ETTTTKSSTAET and TRSG…STGT. Acidic residues predominate over residues 224-251; sequence EDPEYDSAEEDYLSTDSEEFSEDSDNSS. Over residues 252-270 the composition is skewed to basic and acidic residues; sequence EENKDTNEPSTKDAEKTVP. Residues 292-308 are compositionally biased toward acidic residues; it reads ENEDFDLETSEDDSSDD. The 178-residue stretch at 408-585 folds into the Helicase ATP-binding domain; that stretch reads MEQIFANDVV…KLLFSVPPPI (178 aa). Residue 421–428 coordinates ATP; that stretch reads GATGSGKT. The DEAH box motif lies at 522–525; sequence DEAH. The 221-residue stretch at 611 to 831 folds into the Helicase C-terminal domain; it reads AFDKVCLIHK…SIVLQMKNMN (221 aa). Over residues 673–683 the composition is skewed to acidic residues; sequence EDLQSETEDID. Positions 673 to 696 are disordered; that stretch reads EDLQSETEDIDQVPTSSSSSVTYD.

The protein belongs to the DEAD box helicase family. DEAH subfamily.

The protein localises to the nucleus. It localises to the nucleolus. The enzyme catalyses ATP + H2O = ADP + phosphate + H(+). This is Putative ATP-dependent RNA helicase PB1A10.06c from Schizosaccharomyces pombe (strain 972 / ATCC 24843) (Fission yeast).